The sequence spans 402 residues: UDP-N-acetylmuramoylalanine--D-glutamate ligase (402 aa).

97–103 (GTNGKTT) is a binding site for ATP.

It belongs to the MurCDEF family.

The protein localises to the cytoplasm. The enzyme catalyses UDP-N-acetyl-alpha-D-muramoyl-L-alanine + D-glutamate + ATP = UDP-N-acetyl-alpha-D-muramoyl-L-alanyl-D-glutamate + ADP + phosphate + H(+). Its pathway is cell wall biogenesis; peptidoglycan biosynthesis. Cell wall formation. Catalyzes the addition of glutamate to the nucleotide precursor UDP-N-acetylmuramoyl-L-alanine (UMA). This chain is UDP-N-acetylmuramoylalanine--D-glutamate ligase, found in Campylobacter jejuni (strain RM1221).